The following is a 164-amino-acid chain: Phosphopantetheine adenylyltransferase (164 aa).

Serine 9 contacts substrate. Residues 9-10 (SF) and histidine 17 each bind ATP. The substrate site is built by lysine 41, leucine 73, and lysine 87. ATP is bound by residues 88–90 (GLR), glutamate 98, and 123–129 (HSFLSSS).

The protein belongs to the bacterial CoaD family. In terms of assembly, homohexamer. The cofactor is Mg(2+).

It localises to the cytoplasm. It catalyses the reaction (R)-4'-phosphopantetheine + ATP + H(+) = 3'-dephospho-CoA + diphosphate. It functions in the pathway cofactor biosynthesis; coenzyme A biosynthesis; CoA from (R)-pantothenate: step 4/5. Reversibly transfers an adenylyl group from ATP to 4'-phosphopantetheine, yielding dephospho-CoA (dPCoA) and pyrophosphate. This is Phosphopantetheine adenylyltransferase from Rubrobacter xylanophilus (strain DSM 9941 / JCM 11954 / NBRC 16129 / PRD-1).